Here is a 498-residue protein sequence, read N- to C-terminus: MTSKIAQNLKQPALDFLSFVNASPTPFHAVQSAKELLSKAGFQEIKEKDSWSSTCRPGGKYYLTRNSSTIVAFAIGKKWKPGNPISMIGAHTDSPVLRIKPVSNKRGEGFVQVGVETYGGGIWHTWFDRDLGVAGRAMVRTGDGSIVQKLVKIDRPILRIPTLAIHLDRQETFAFNKETQLFPIAGLVAAELNRTADSTATGEKTAANNETEKGDFAPLKSVTERHHPYLVELIAAEAGVKPDDILDFEMILFDTQKSCLGGLLEEFVFSPRLDNLNSSFCATVGLIDSVADASALDDEPSIRLIALFDHEEIGSRTAQGADSNVLPAIIRRLSVLPSSTSGNEDLATAFEETLSTSFLLSADMAHAVHPNYAAKYENDHRPEINKGPVIKINANARYATNSPGIVLLQEVARKAAEDGGEGVPLQLFVVRNDSSCGSTIGPMLSAALGARTLDLGNPQLSMHSIRETGGTYDVGHSIRLFTSFFKHYSNTSKTIFVD.

Residue H91 participates in Zn(2+) binding. H166 provides a ligand contact to substrate. D274 serves as a coordination point for Zn(2+). E311 contributes to the substrate binding site. 2 residues coordinate Zn(2+): E312 and D363. Residues D363, H366, K391, and Y398 each coordinate substrate. H463 is a Zn(2+) binding site.

Belongs to the peptidase M18 family. In terms of assembly, tetrahedron-shaped homododecamer built from six homodimers. Requires Zn(2+) as cofactor. In terms of processing, the N-terminus is blocked.

It catalyses the reaction Release of an N-terminal aspartate or glutamate from a peptide, with a preference for aspartate.. With respect to regulation, inhibited by zinc. Stimulated by calcium and bacitracin. In Aspergillus oryzae (strain ATCC 42149 / RIB 40) (Yellow koji mold), this protein is Aspartyl aminopeptidase (dapA).